We begin with the raw amino-acid sequence, 396 residues long: Jacalin-related lectin 45 (396 aa).

3 consecutive Jacalin-type lectin domains span residues 3–138 (KKVT…KTSH), 144–264 (QFRM…NFAV), and 270–392 (VKKL…YVKP).

This sequence belongs to the jacalin lectin family.

The chain is Jacalin-related lectin 45 (JAL45) from Arabidopsis thaliana (Mouse-ear cress).